We begin with the raw amino-acid sequence, 205 residues long: Heme-binding protein 2 (205 aa).

A disordered region spans residues 1-37; sequence MAEEPEPDLGVAEGSEDQALEMPSWKAPEDIDPQPGS. Ala-2 bears the N-acetylalanine mark. Phosphoserine is present on Ser-181.

Belongs to the HEBP family. As to quaternary structure, monomer. Interacts with LRPPRC. May interact with BCL2L1; an interaction with BCL2L1 was observed using a peptide, but not with the full-length protein. The full-length protein would have to undergo a major conformation change for the interaction to occur. Interacts with PDCD6.

The protein localises to the cytoplasm. The protein resides in the mitochondrion. Its function is as follows. Can promote mitochondrial permeability transition and facilitate necrotic cell death under different types of stress conditions. May have low affinity for heme. This is Heme-binding protein 2 (Hebp2) from Mus musculus (Mouse).